The sequence spans 252 residues: Probable transcriptional regulatory protein Npun_R5651 (252 aa).

Belongs to the TACO1 family.

The protein resides in the cytoplasm. The polypeptide is Probable transcriptional regulatory protein Npun_R5651 (Nostoc punctiforme (strain ATCC 29133 / PCC 73102)).